The primary structure comprises 62 residues: Large ribosomal subunit protein bL32 (62 aa).

The protein belongs to the bacterial ribosomal protein bL32 family.

The protein is Large ribosomal subunit protein bL32 of Treponema denticola (strain ATCC 35405 / DSM 14222 / CIP 103919 / JCM 8153 / KCTC 15104).